A 155-amino-acid chain; its full sequence is uncharacterized protein (155 aa).

The next 5 membrane-spanning stretches (helical) occupy residues 4–24 (IVGA…AGYL), 46–66 (AIGI…AIVY), 77–97 (FWFT…FQFT), 101–121 (LLAA…LLII), and 130–150 (SYLL…SFTI).

Belongs to the TspO/BZRP family.

It is found in the cell membrane. This is an uncharacterized protein from Bacillus subtilis (strain 168).